A 288-amino-acid polypeptide reads, in one-letter code: Fructose-bisphosphate aldolase (288 aa).

Ser-49 is a D-glyceraldehyde 3-phosphate binding site. Asp-84 serves as the catalytic Proton donor. His-85, Asp-105, Glu-135, and His-177 together coordinate Zn(2+). Dihydroxyacetone phosphate is bound at residue Gly-178. Residue His-206 coordinates Zn(2+). Dihydroxyacetone phosphate-binding positions include 207-209 (GGS) and 228-231 (NINT).

It belongs to the class II fructose-bisphosphate aldolase family. As to quaternary structure, homodimer. The cofactor is Zn(2+).

The catalysed reaction is beta-D-fructose 1,6-bisphosphate = D-glyceraldehyde 3-phosphate + dihydroxyacetone phosphate. It functions in the pathway carbohydrate degradation; glycolysis; D-glyceraldehyde 3-phosphate and glycerone phosphate from D-glucose: step 4/4. Catalyzes the aldol condensation of dihydroxyacetone phosphate (DHAP or glycerone-phosphate) with glyceraldehyde 3-phosphate (G3P) to form fructose 1,6-bisphosphate (FBP) in gluconeogenesis and the reverse reaction in glycolysis. In Mycoplasma genitalium (strain ATCC 33530 / DSM 19775 / NCTC 10195 / G37) (Mycoplasmoides genitalium), this protein is Fructose-bisphosphate aldolase (fba).